Consider the following 353-residue polypeptide: Phosphate acyltransferase (353 aa).

Belongs to the PlsX family. In terms of assembly, homodimer. Probably interacts with PlsY.

Its subcellular location is the cytoplasm. It carries out the reaction a fatty acyl-[ACP] + phosphate = an acyl phosphate + holo-[ACP]. The protein operates within lipid metabolism; phospholipid metabolism. Functionally, catalyzes the reversible formation of acyl-phosphate (acyl-PO(4)) from acyl-[acyl-carrier-protein] (acyl-ACP). This enzyme utilizes acyl-ACP as fatty acyl donor, but not acyl-CoA. The chain is Phosphate acyltransferase from Rhodopseudomonas palustris (strain HaA2).